The sequence spans 361 residues: Protein RecA (361 aa).

77 to 84 (GPESSGKT) serves as a coordination point for ATP.

Belongs to the RecA family.

The protein localises to the cytoplasm. Its function is as follows. Can catalyze the hydrolysis of ATP in the presence of single-stranded DNA, the ATP-dependent uptake of single-stranded DNA by duplex DNA, and the ATP-dependent hybridization of homologous single-stranded DNAs. It interacts with LexA causing its activation and leading to its autocatalytic cleavage. The protein is Protein RecA of Brucella anthropi (strain ATCC 49188 / DSM 6882 / CCUG 24695 / JCM 21032 / LMG 3331 / NBRC 15819 / NCTC 12168 / Alc 37) (Ochrobactrum anthropi).